A 399-amino-acid polypeptide reads, in one-letter code: Accessory Sec system protein translocase subunit SecY2 (399 aa).

Transmembrane regions (helical) follow at residues 14-34 (ILFT…SIVG), 60-80 (LNVF…IMLL), 102-122 (IITI…YIHN), 128-148 (SNII…VWLA), 152-172 (ITYG…KSLF), 184-204 (VLLL…LLFI), 238-258 (ISIM…NLIA), 272-292 (FANP…SYLL), 335-355 (WTGA…TLLV), and 362-382 (IYFS…GETI).

Belongs to the SecY/SEC61-alpha family. SecY2 subfamily. In terms of assembly, component of the accessory SecA2/SecY2 protein translocase complex required to export cell wall proteins. May form heterotrimers with SecE and SecG subunits.

It localises to the cell membrane. Part of the accessory SecA2/SecY2 system specifically required for export of possible cell wall proteins. The central subunit of a protein translocation channel. The sequence is that of Accessory Sec system protein translocase subunit SecY2 from Staphylococcus haemolyticus (strain JCSC1435).